The following is a 278-amino-acid chain: Tryptophan synthase alpha chain (278 aa).

Active-site proton acceptor residues include E49 and D60.

The protein belongs to the TrpA family. In terms of assembly, tetramer of two alpha and two beta chains.

The enzyme catalyses (1S,2R)-1-C-(indol-3-yl)glycerol 3-phosphate + L-serine = D-glyceraldehyde 3-phosphate + L-tryptophan + H2O. It participates in amino-acid biosynthesis; L-tryptophan biosynthesis; L-tryptophan from chorismate: step 5/5. In terms of biological role, the alpha subunit is responsible for the aldol cleavage of indoleglycerol phosphate to indole and glyceraldehyde 3-phosphate. The chain is Tryptophan synthase alpha chain from Psychrobacter arcticus (strain DSM 17307 / VKM B-2377 / 273-4).